Reading from the N-terminus, the 323-residue chain is MKKEINMENLLYIIIEGGLKSLIVIIGLLIGVAFATLLERKVMAAMQKRRGPNVVGFVGLLQPLADGLKLVLKETIIPIVADKIIYAIAPILTFTISIVLWSVIAVGVQSVFASINSGVIFILAISSIGVYGIILAGWASNSKYAFLGGLRSAAQMVSYEVALGLIILSIITYAGTVNIQEIMENQEKVWFIVPLLPGFLLAFISALAETNRPPFDLPEAEAELVSGYNVEYSSTGFALFFLGEYANIILMSVLLSVFFLGGIVSNKISGAMKGVGMLCSFIWVRATLPRYRYDQLMYLGWKSLLPFALLIYIGVISMVLIIK.

The next 9 membrane-spanning stretches (helical) occupy residues 10–30, 52–72, 84–104, 119–139, 157–177, 189–209, 245–265, 268–288, and 302–322; these read LLYI…GLLI, PNVV…KLVL, IIYA…WSVI, VIFI…AGWA, VSYE…AGTV, VWFI…ALAE, YANI…GIVS, ISGA…RATL, and KSLL…VLII.

It belongs to the complex I subunit 1 family.

It is found in the mitochondrion inner membrane. It carries out the reaction a ubiquinone + NADH + 5 H(+)(in) = a ubiquinol + NAD(+) + 4 H(+)(out). Its function is as follows. Core subunit of the mitochondrial membrane respiratory chain NADH dehydrogenase (Complex I) that is believed to belong to the minimal assembly required for catalysis. Complex I functions in the transfer of electrons from NADH to the respiratory chain. The immediate electron acceptor for the enzyme is believed to be ubiquinone. The sequence is that of NADH-ubiquinone oxidoreductase chain 1 (nad1) from Dictyostelium citrinum (Slime mold).